We begin with the raw amino-acid sequence, 375 residues long: Alcohol dehydrogenase 1 (375 aa).

N-acetylserine is present on S2. The Zn(2+) site is built by C47, H68, C98, C101, C104, C112, and C175. Residues 200–205 (GLGGVG), D224, K229, 293–295 (LGV), and R370 each bind NAD(+).

It belongs to the zinc-containing alcohol dehydrogenase family. Class-I subfamily. In terms of assembly, homodimer. Zn(2+) serves as cofactor.

It localises to the cytoplasm. The catalysed reaction is a primary alcohol + NAD(+) = an aldehyde + NADH + H(+). It catalyses the reaction a secondary alcohol + NAD(+) = a ketone + NADH + H(+). This chain is Alcohol dehydrogenase 1 (ADH1), found in Apteryx australis (Southern brown kiwi).